The following is a 309-amino-acid chain: GDP-6-deoxy-D-mannose reductase (309 aa).

NADP(+) is bound by residues 11–12, Arg-32, 47–48, and 71–73; these read FV, DI, and AKS. Residue 114–115 participates in substrate binding; sequence SS. NADP(+) is bound at residue Tyr-140. Substrate contacts are provided by residues Asn-169, Asp-183, Arg-209, and 269-272; that span reads RPSE.

The protein belongs to the NAD(P)-dependent epimerase/dehydratase family. GDP-6-deoxy-D-mannose reductase subfamily.

It catalyses the reaction GDP-alpha-D-rhamnose + NAD(+) = GDP-4-dehydro-alpha-D-rhamnose + NADH + H(+). The catalysed reaction is GDP-alpha-D-rhamnose + NADP(+) = GDP-4-dehydro-alpha-D-rhamnose + NADPH + H(+). Functionally, reductase that catalyzes the conversion of GDP-6-deoxy-D-mannose to GDP-4-dehydro-6-deoxy-D-mannose (GDP-D-rhamnose). The sequence is that of GDP-6-deoxy-D-mannose reductase (rmd) from Aneurinibacillus thermoaerophilus.